We begin with the raw amino-acid sequence, 75 residues long: DNA-directed RNA polymerase subunit omega (75 aa).

This sequence belongs to the RNA polymerase subunit omega family. As to quaternary structure, in cyanobacteria the RNAP catalytic core is composed of 2 alpha, 1 beta, 1 beta', 1 gamma and 1 omega subunit. When a sigma factor is associated with the core the holoenzyme is formed, which can initiate transcription.

It catalyses the reaction RNA(n) + a ribonucleoside 5'-triphosphate = RNA(n+1) + diphosphate. Functionally, promotes RNA polymerase assembly. Latches the N- and C-terminal regions of the beta' subunit thereby facilitating its interaction with the beta and alpha subunits. This Picosynechococcus sp. (strain ATCC 27264 / PCC 7002 / PR-6) (Agmenellum quadruplicatum) protein is DNA-directed RNA polymerase subunit omega.